We begin with the raw amino-acid sequence, 297 residues long: Undecaprenyl-diphosphatase 3 (297 aa).

Transmembrane regions (helical) follow at residues 39–59 (PGAAFTAVTQIGTETAVLIYF), 89–109 (WLVLLGTIPIGLLGVTLQDAI), 118–138 (LIATTLIVLGLILGGADWYAS), 203–223 (FLLAMPAVLASGVFELKSIGG), 237–257 (PTIVATVVAFATGYAAIAWFL), and 268–288 (FVLYRVALGLLLLALLAGGAI).

It belongs to the UppP family.

The protein resides in the cell membrane. It catalyses the reaction di-trans,octa-cis-undecaprenyl diphosphate + H2O = di-trans,octa-cis-undecaprenyl phosphate + phosphate + H(+). In terms of biological role, catalyzes the dephosphorylation of undecaprenyl diphosphate (UPP). Confers resistance to bacitracin. The chain is Undecaprenyl-diphosphatase 3 from Frankia alni (strain DSM 45986 / CECT 9034 / ACN14a).